The sequence spans 606 residues: Gastrula zinc finger protein XlCGF66.1 (606 aa).

Disordered stretches follow at residues 1 to 31 (MGMW…RGKK) and 240 to 271 (TLHS…KRQK). The segment covering 242–262 (HSKDSCNEGHKHLSHKSDYNK) has biased composition (basic and acidic residues). 11 C2H2-type zinc fingers span residues 273–295 (FSCS…QKTH), 300–322 (LLCL…RQTH), 328–350 (FSCS…QITH), 384–407 (DFCS…QQVH), 413–435 (FSCT…QRTH), 441–464 (YSCS…QQVH), 470–492 (FFCS…QRTH), 498–521 (YSCS…QQVH), 527–549 (FSCS…QRTH), 555–578 (DFCF…QQVH), and 584–606 (FSCS…HRTH).

The protein belongs to the krueppel C2H2-type zinc-finger protein family.

The protein localises to the nucleus. Functionally, may be involved in transcriptional regulation. This chain is Gastrula zinc finger protein XlCGF66.1, found in Xenopus laevis (African clawed frog).